Reading from the N-terminus, the 359-residue chain is MVNDTFEQALQNAINIARLAPSSHNCQPWSVHYDAATRCGEVSIDRQRALKGLPSLEREMLMSCGIFFEYLSTLLKHSGYPLDWQWVGARQNGSSGMLISFAPSAPCVADLVAYQQWVQRISDRHTVRTAYQPTQVNEQQQAQLYALFDRSPVTCDIKYGEATRHDVAFLTANYASLDFADQQAWRETYHYIRFNEQQAAEDGFYLHHLFGPVSCGFRWFFRIAFHPRLSWLAKRLRLPASMAKGLAELVVEGPQYLALSLEHESDENLFIAGMKLGQLWLMLQSWGWSLHPLSVLVQHATARCALADTVRLTGLPVFFARFGQHRQSGIPTPRRAWQRILTTTQHSFSPENGADVKQP.

Belongs to the nitroreductase family. The cofactor is FMN.

It functions in the pathway antibiotic biosynthesis; prodigiosin biosynthesis. Involved in the biosynthesis of 4-methoxy-2,2'-bipyrrole-5-carbaldehyde (MBC), one of the terminal products involved in the biosynthesis of the red antibiotic prodigiosin (Pig). Catalyzes the oxidation of the hydroxy group of 4-hydroxy-2,2'-bipyrrole-5-methanol (HBM) to yield 4-methoxy-2,2'-bipyrrole-5-carbaldehyde (MBC). The polypeptide is Probable NAD(P)H nitroreductase PigM (Serratia sp. (strain ATCC 39006) (Prodigiosinella confusarubida)).